Here is a 518-residue protein sequence, read N- to C-terminus: Delta(14)-sterol reductase erg24B (518 aa).

A glycan (N-linked (GlcNAc...) asparagine) is linked at asparagine 36. Helical transmembrane passes span 110–130 (VTMW…FLPG), 150–170 (AFLS…LYGT), 182–202 (YVQV…FVYL), 294–314 (IVLT…MEPA), 321–341 (VIMD…VPFL), and 355–375 (ELGL…YVIF). Residues lysine 382, arginine 386, leucine 409, tryptophan 414, and 421 to 422 (NY) contribute to the NADP(+) site. A helical membrane pass occupies residues 464–484 (SRGWGMIFTYFYMIYFGVLLL). NADP(+)-binding positions include aspartate 490, 494-498 (CKRKY), and tyrosine 505.

This sequence belongs to the ERG4/ERG24 family.

It is found in the endoplasmic reticulum membrane. The protein operates within steroid metabolism; ergosterol biosynthesis. Its function is as follows. Delta(14)-sterol reductase; part of the third module of ergosterol biosynthesis pathway that includes the late steps of the pathway. Catalyzes the reduction of the C14=C15 double bond within 4,4,24-trimethyl ergosta-8,14,24(28)-trienolto produce 4,4-dimethylfecosterol. The third module or late pathway involves the ergosterol synthesis itself through consecutive reactions that mainly occur in the endoplasmic reticulum (ER) membrane. Firstly, the squalene synthase erg9 catalyzes the condensation of 2 farnesyl pyrophosphate moieties to form squalene, which is the precursor of all steroids. Squalene synthase is crucial for balancing the incorporation of farnesyl diphosphate (FPP) into sterol and nonsterol isoprene synthesis. Secondly, squalene is converted into lanosterol by the consecutive action of the squalene epoxidase erg1 and the lanosterol synthase erg7. Then, the delta(24)-sterol C-methyltransferase erg6 methylates lanosterol at C-24 to produce eburicol. Eburicol is the substrate of the sterol 14-alpha demethylase encoded by cyp51A and cyp51B, to yield 4,4,24-trimethyl ergosta-8,14,24(28)-trienol. The C-14 reductase erg24 then reduces the C14=C15 double bond which leads to 4,4-dimethylfecosterol. A sequence of further demethylations at C-4, involving the C-4 demethylation complex containing the C-4 methylsterol oxidases erg25A or erg25B, the sterol-4-alpha-carboxylate 3-dehydrogenase erg26 and the 3-keto-steroid reductase erg27, leads to the production of fecosterol via 4-methylfecosterol. The C-8 sterol isomerase erg2 then catalyzes the reaction which results in unsaturation at C-7 in the B ring of sterols and thus converts fecosterol to episterol. The sterol-C5-desaturase erg3B then catalyzes the introduction of a C-5 double bond in the B ring to produce 5-dehydroepisterol. The 2 other sterol-C5-desaturases, erg3A and erg3C, seem to be less important in ergosterol biosynthesis. The C-22 sterol desaturase erg5 further converts 5-dehydroepisterol into ergosta-5,7,22,24(28)-tetraen-3beta-ol by forming the C-22(23) double bond in the sterol side chain. Finally, ergosta-5,7,22,24(28)-tetraen-3beta-ol is substrate of the C-24(28) sterol reductases erg4A and erg4B to produce ergosterol. Possible alternative sterol biosynthetic pathways might exist from fecosterol to ergosterol, depending on the activities of the erg3 isoforms. The protein is Delta(14)-sterol reductase erg24B of Aspergillus fumigatus (strain ATCC MYA-4609 / CBS 101355 / FGSC A1100 / Af293) (Neosartorya fumigata).